We begin with the raw amino-acid sequence, 358 residues long: UDP-N-acetylglucosamine--N-acetylmuramyl-(pentapeptide) pyrophosphoryl-undecaprenol N-acetylglucosamine transferase (358 aa).

UDP-N-acetyl-alpha-D-glucosamine-binding positions include 11–13 (TGG), asparagine 120, arginine 161, serine 188, and glutamine 282.

It belongs to the glycosyltransferase 28 family. MurG subfamily.

It localises to the cell inner membrane. It catalyses the reaction di-trans,octa-cis-undecaprenyl diphospho-N-acetyl-alpha-D-muramoyl-L-alanyl-D-glutamyl-meso-2,6-diaminopimeloyl-D-alanyl-D-alanine + UDP-N-acetyl-alpha-D-glucosamine = di-trans,octa-cis-undecaprenyl diphospho-[N-acetyl-alpha-D-glucosaminyl-(1-&gt;4)]-N-acetyl-alpha-D-muramoyl-L-alanyl-D-glutamyl-meso-2,6-diaminopimeloyl-D-alanyl-D-alanine + UDP + H(+). Its pathway is cell wall biogenesis; peptidoglycan biosynthesis. Its function is as follows. Cell wall formation. Catalyzes the transfer of a GlcNAc subunit on undecaprenyl-pyrophosphoryl-MurNAc-pentapeptide (lipid intermediate I) to form undecaprenyl-pyrophosphoryl-MurNAc-(pentapeptide)GlcNAc (lipid intermediate II). In Synechococcus sp. (strain CC9902), this protein is UDP-N-acetylglucosamine--N-acetylmuramyl-(pentapeptide) pyrophosphoryl-undecaprenol N-acetylglucosamine transferase.